Reading from the N-terminus, the 239-residue chain is tRNA (guanine-N(1)-)-methyltransferase (239 aa).

Residues Gly-110 and 129–134 (LGDFVL) each bind S-adenosyl-L-methionine.

Belongs to the RNA methyltransferase TrmD family. Homodimer.

It is found in the cytoplasm. The enzyme catalyses guanosine(37) in tRNA + S-adenosyl-L-methionine = N(1)-methylguanosine(37) in tRNA + S-adenosyl-L-homocysteine + H(+). In terms of biological role, specifically methylates guanosine-37 in various tRNAs. The protein is tRNA (guanine-N(1)-)-methyltransferase of Clostridium beijerinckii (strain ATCC 51743 / NCIMB 8052) (Clostridium acetobutylicum).